A 223-amino-acid chain; its full sequence is MTQDEMKFAVAQAALKHVVKDTIIGVGTGSTTNFFIDALAKIKNEIKGAIASSKATRQRLESYDIKVFDLNEVETISVYIDGADESDDGLNLIKGGGGALMREKIVAAVANQFICIADESKLVTIMGDFPLPVEVIPMASNYVKYQISQRIGGTPTVRENFITDNGNLILDIKDLKITNPKVMETKLNSITGVVANGLFANRGADILLLGTSNGVKIVTRLIG.

Residues 28–31 (TGST), 81–84 (DGAD), and 94–97 (KGGG) each bind substrate. Glu103 acts as the Proton acceptor in catalysis. Lys121 contacts substrate.

Belongs to the ribose 5-phosphate isomerase family. In terms of assembly, homodimer.

It catalyses the reaction aldehydo-D-ribose 5-phosphate = D-ribulose 5-phosphate. Its pathway is carbohydrate degradation; pentose phosphate pathway; D-ribose 5-phosphate from D-ribulose 5-phosphate (non-oxidative stage): step 1/1. In terms of biological role, catalyzes the reversible conversion of ribose-5-phosphate to ribulose 5-phosphate. In Ruthia magnifica subsp. Calyptogena magnifica, this protein is Ribose-5-phosphate isomerase A.